The sequence spans 115 residues: Large ribosomal subunit protein bL19 (115 aa).

Belongs to the bacterial ribosomal protein bL19 family.

Its function is as follows. This protein is located at the 30S-50S ribosomal subunit interface and may play a role in the structure and function of the aminoacyl-tRNA binding site. This Klebsiella pneumoniae (strain 342) protein is Large ribosomal subunit protein bL19.